The chain runs to 47 residues: Defensin-like protein 2 (47 aa).

4 disulfide bridges follow: C3–C47, C14–C36, C20–C41, and C24–C43.

Belongs to the DEFL family.

The polypeptide is Defensin-like protein 2 (Zea mays (Maize)).